A 561-amino-acid polypeptide reads, in one-letter code: Sesquiterpene synthase 2 (561 aa).

Residues Asp313, Asp317, Asp458, and Glu466 each coordinate Mg(2+). Positions 313–317 (DDIYD) match the DDXXD motif motif.

This sequence belongs to the terpene synthase family. Tpsa subfamily. It depends on Mn(2+) as a cofactor. Mg(2+) serves as cofactor.

Its subcellular location is the cytoplasm. The catalysed reaction is (2E,6E)-farnesyl diphosphate + H2O = kunzeaol + diphosphate. The protein operates within secondary metabolite biosynthesis; terpenoid biosynthesis. Functionally, involved in the biosynthesis of kunzeaol. Produces mainly (-)-germacrene D along with gamma-cadinene. This Thapsia garganica (Deadly carrot) protein is Sesquiterpene synthase 2 (STS2).